The following is a 321-amino-acid chain: Olfactory receptor 5K4 (321 aa).

Topologically, residues 1-25 are extracellular; sequence MARENHSLAAEFILIGFTNYPELKT. Residue Asn-5 is glycosylated (N-linked (GlcNAc...) asparagine). Residues 26-46 traverse the membrane as a helical segment; that stretch reads LLFVVFSAIYLVTMVGNLGLV. Residues 47-54 lie on the Cytoplasmic side of the membrane; that stretch reads ALIYVERR. A helical transmembrane segment spans residues 55-75; it reads LLTPMYIFLGNLALMDSCCSC. At 76–97 the chain is on the extracellular side; that stretch reads AVTPKMLENFFSEDRIISLYEC. Residues Cys-97 and Cys-179 are joined by a disulfide bond. A helical membrane pass occupies residues 98–118; sequence MAQFYFLCLAETTDCFLLATM. Topologically, residues 119 to 139 are cytoplasmic; sequence AYDRYVAICHPLQYHTMMSKT. A helical membrane pass occupies residues 140-160; sequence LCIRMTTGAFKAGNLHSMIHV. At 161–205 the chain is on the extracellular side; it reads GLLLRLTFCRSNKIHHFFCDILPLYRLSCTDPSINELMIYIFSIP. Residues 206 to 226 traverse the membrane as a helical segment; it reads IQIFTIATVLISYLCILLTVF. At 227-240 the chain is on the cytoplasmic side; sequence KMKSKEGRGKAFST. The chain crosses the membrane as a helical span at residues 241–261; it reads CASHFLSVSIFYICLLMYIGP. Residues 262–268 lie on the Extracellular side of the membrane; it reads SEEGDKD. Residues 269–289 form a helical membrane-spanning segment; that stretch reads TPVAIFYAIVIPLLNPFIYSL. Topologically, residues 290–321 are cytoplasmic; it reads RNKEVINVLKKIMRNYNILKQTCSIANLFLIY.

It belongs to the G-protein coupled receptor 1 family.

It localises to the cell membrane. In terms of biological role, odorant receptor. The chain is Olfactory receptor 5K4 (OR5K4) from Homo sapiens (Human).